Consider the following 514-residue polypeptide: Ras-GEF domain-containing family member 1B-A (514 aa).

One can recognise an N-terminal Ras-GEF domain in the interval 76 to 206 (HDNNLISGSL…MTQTLIRKLT (131 aa)). One can recognise a Ras-GEF domain in the interval 246–494 (DPFTLAQQLT…YLASYESEGP (249 aa)).

As to expression, detected in oocytes, and in embryos at 4 to 120 hours post-fertilization (hpf). Detected along marginal blastomeres at early epiboly stage and throughout the margin at the onset of gastrulation. At 60% epiboly, strongest expression is found in the dorsal shield region and is restricted to the epiblast. Detected in the anterior border of the presomitic mesoderm at the end of epiboly. Detected in adaxial cells, in the somites and in the nervous system during somitogenesis. Detected in diencephalon and hindbrain and in cells surrounding the notochord, including adaxial cells and ventral mesendoderm, in 15-somite stage embryos. At 48 hpf, detected mainly in the brain.

In terms of biological role, guanine nucleotide exchange factor (GEF) for Ras family proteins (in vitro). The polypeptide is Ras-GEF domain-containing family member 1B-A (rasgef1ba) (Danio rerio (Zebrafish)).